The sequence spans 74 residues: Omega-conotoxin-like PuIIA (74 aa).

An N-terminal signal peptide occupies residues methionine 1–alanine 22. Positions glutamate 23 to arginine 46 are excised as a propeptide. Disulfide bonds link cysteine 48-cysteine 62, cysteine 55-cysteine 66, and cysteine 61-cysteine 73.

This sequence belongs to the conotoxin O1 superfamily. Expressed by the venom duct.

Its subcellular location is the secreted. Functionally, omega-conotoxins act at presynaptic membranes, they bind and block voltage-gated calcium channels (Cav). The chain is Omega-conotoxin-like PuIIA from Conus pulicarius (Flea-bitten cone).